A 1161-amino-acid polypeptide reads, in one-letter code: Type IV pilus biogenesis factor PilY1 (1161 aa).

An N-terminal signal peptide occupies residues 1-30 (MKSVLHQIGKTSLAAALSGAVLLSAQTTHA). Ca(2+)-binding residues include Asp-598, Asp-600, Asn-602, and Asp-606. Positions 617 to 619 (RGD) are integrin-binding motif RGD. Ca(2+) is bound by residues Asp-849, Asn-851, Asp-853, Val-855, and Asp-857. Positions 1136-1161 (SGECLTVNPGPNTRGRQNWRPIEGKN) are disordered.

Belongs to the PilY1 family. In terms of assembly, interacts (via C-terminus) with host integrins alpha-V/beta-3 (ITGAV/ITGB3) and alpha-V/beta-5 (ITGAV/ITGB5).

It localises to the fimbrium. It is found in the membrane. The protein resides in the cytoplasm. Its subcellular location is the cytosol. Involved in pilus assembly, twitching motility and adhesion to host cells. Primes type IV pili (T4P) assembly and is required for inclusion of minor pilins PilV, PilW and PilX to the surface pili. Stabilizes assembled pilus fibers likely by antagonizing retraction mediated by PilT. Calcium-binding and calcium release by PilY1 seem to be essential for twitching motility and for regulation of pilus retraction dynamics of PilT. The polypeptide is Type IV pilus biogenesis factor PilY1 (Pseudomonas aeruginosa (strain ATCC 15692 / DSM 22644 / CIP 104116 / JCM 14847 / LMG 12228 / 1C / PRS 101 / PAO1)).